A 478-amino-acid polypeptide reads, in one-letter code: Puromycin-sensitive aminopeptidase-like protein (478 aa).

Substrate contacts are provided by residues glutamate 180 and 316–320 (GAMEN). Histidine 352 serves as a coordination point for Zn(2+). Glutamate 353 functions as the Proton acceptor in the catalytic mechanism. 2 residues coordinate Zn(2+): histidine 356 and glutamate 375.

This sequence belongs to the peptidase M1 family. Requires Zn(2+) as cofactor.

Its function is as follows. Aminopeptidase with broad substrate specificity to several peptides. The chain is Puromycin-sensitive aminopeptidase-like protein (NPEPPSL1) from Homo sapiens (Human).